The following is a 513-amino-acid chain: MTHASSAWFLAAVVIVTFIVVRHIRSSWRKLPPGPRGFPIVGNLLQLRNKQWLTFTELGKKYGDLMYFNVAGQPLIVINSLKVATDLLDRAKFSDRPRNIVASDIMTGGMFVAFAPYGNAWRHMRKAAHEGLNKNIVNQYHPIQIKEAVLLANDLLAEPNRWVSHVRRTAASTIMSIIYDKPPTSEQDPSIKRINDFATRLTRAAMPGAHFVESFPWMLRIPSKYAKWKRDAEGWYAKDSSMFESLFHSVKDRVAEGSNHPSFAATLIQGAGRHGLTDHENSWLAGAMYTAGAESSSAAMSWWMLAMILYPDAQKRAQAELDKVVGRDRLPAFSDYEHLPYVRAMVKETLRWRAVDPVGLPHRSTEDDIYNGYFIPAGSILIANVWHINRDPENYGLDAEHFDPARHLDGTGQLAQVAGTKEENHVSFGFGRRICVGRHIANDTLFAVIAMLLWAIDIEPAKDEKGASLPLDVDGCIEDGVVVRPLPFKVKVTPRFPEAQAIVEQERELLGHY.

Residues 1 to 21 form a helical membrane-spanning segment; it reads MTHASSAWFLAAVVIVTFIVV. Cys-435 contributes to the heme binding site. A glycan (N-linked (GlcNAc...) asparagine) is linked at Asn-442.

Belongs to the cytochrome P450 family. Requires heme as cofactor.

It is found in the membrane. It functions in the pathway secondary metabolite biosynthesis. In terms of biological role, cytochrome P450 monooxygenase, part of the gene cluster that mediates the biosynthesis of melleolides, a range of antifungal and phytotoxic polyketide derivatives composed of an orsellinic acid (OA) moiety esterified to various sesquiterpene alcohols. The first step in melleolides biosynthesis is performed by the delta(6)-protoilludene synthase PRO1 which catalyzes the cyclization of farnesyl diphosphate to protoilludene. The orsellinic acid synthase armB produces OA by condensing acetyl-CoA with 3 malonyl-CoA units in a three-round chain elongation reaction folowed by a C2-C7 ring closure. ArmB further catalyzes the trans-esterification of OA to the various sesquiterpene alcohols resulting from the hydroxylation of protoilludene. The melleolides cluster also includes 5 cytochrome P450 monooxygenases, 4 NAD(+)-dependent oxidoreductases, one flavin-dependent oxidoreductase, and one O-methyltransferase. The cytochrome P450 monooxygenases may be involved in protoilludene hydroxylation to elaborate melleolides with multiple alcohol groups, such as melleolide D, which carries alcohol functionalities at C-4, C-5, C-10, and C-13. The role of the NAD(+)-dependent enzymes remains unknown. Numerous melleolides, including arnamial, show 5'-O-methylation of the aromatic moiety which may be catalyzed by the methyltransferase encoded in the cluster. The flavin-dependent oxidoreductase might represent the dehydrogenase yielding the aldehyde in position 1 of arnamial and other melleolides. Finally, several halogenase localized outside of the cluster, are able to catalyze the transfer of a single chlorine atom to the melleolide backbone, resulting in a 6'-chloromelleolide product. This Armillaria gallica (Bulbous honey fungus) protein is Cytochrome P450 monooxygenase ARMGADRAFT_1018418.